The sequence spans 82 residues: Putative defensin-like protein 134 (82 aa).

Positions 1–26 (MEVRSLNLCFLLVLVLLMSPAPTAVA) are cleaved as a signal peptide. Cystine bridges form between Cys-32–Cys-79, Cys-42–Cys-68, Cys-47–Cys-74, and Cys-51–Cys-76.

The protein belongs to the DEFL family.

The protein localises to the secreted. In Arabidopsis thaliana (Mouse-ear cress), this protein is Putative defensin-like protein 134.